The chain runs to 364 residues: Nucleoporin SEH1 (364 aa).

WD repeat units lie at residues 10-49 (DHKD…EWHC), 55-96 (THSG…SNDK), 111-152 (DSRT…NLSQ), 160-210 (SCKL…RKYA), 217-258 (TVTD…RESA), and 276-315 (SHNS…NWKC).

This sequence belongs to the WD repeat SEC13 family. In terms of assembly, component of the Nup107-160 subcomplex of the nuclear pore complex (NPC). The Nup107-160 subcomplex includes NUP160, NUP133, NUP107, NUP98, NUP85, NUP43, NUP37, SEH1 and SEC13. Component of the GATOR2 subcomplex, composed of MIOS, SEC13, SEH1L, WDR24 and WDR59. The GATOR2 complex interacts with CASTOR1 and CASTOR2; the interaction is negatively regulated by arginine. The GATOR2 complex interacts with SESN1, SESN2 and SESN3; the interaction is negatively regulated by amino acids.

The protein resides in the chromosome. It is found in the centromere. It localises to the kinetochore. The protein localises to the nucleus. Its subcellular location is the nuclear pore complex. The protein resides in the lysosome membrane. With respect to regulation, the GATOR2 complex is negatively regulated by the upstream amino acid sensors CASTOR1 and SESN2, which sequester the GATOR2 complex in absence of amino acids. In the presence of abundant amino acids, GATOR2 is released from CASTOR1 and SESN2 and activated. In terms of biological role, component of the Nup107-160 subcomplex of the nuclear pore complex (NPC). The Nup107-160 subcomplex is required for the assembly of a functional NPC. The Nup107-160 subcomplex is also required for normal kinetochore microtubule attachment, mitotic progression and chromosome segregation. This subunit plays a role in recruitment of the Nup107-160 subcomplex to the kinetochore. Functionally, as a component of the GATOR2 complex, functions as an activator of the amino acid-sensing branch of the mTORC1 signaling pathway. The GATOR2 complex indirectly activates mTORC1 through the inhibition of the GATOR1 subcomplex. GATOR2 probably acts as an E3 ubiquitin-protein ligase toward GATOR1. In the presence of abundant amino acids, the GATOR2 complex mediates ubiquitination of the NPRL2 core component of the GATOR1 complex, leading to GATOR1 inactivation. In the absence of amino acids, GATOR2 is inhibited, activating the GATOR1 complex. This is Nucleoporin SEH1 (seh1l) from Danio rerio (Zebrafish).